We begin with the raw amino-acid sequence, 110 residues long: Iron-sulfur cluster assembly protein CyaY (110 aa).

It belongs to the frataxin family.

Functionally, involved in iron-sulfur (Fe-S) cluster assembly. May act as a regulator of Fe-S biogenesis. This Pseudomonas fluorescens (strain SBW25) protein is Iron-sulfur cluster assembly protein CyaY.